The chain runs to 1358 residues: Xanthine dehydrogenase/oxidase (1358 aa).

The 2Fe-2S ferredoxin-type domain occupies 8–95; it reads DELVFFVNGK…HVAVTTVEGI (88 aa). [2Fe-2S] cluster is bound by residues C47, C52, C55, C77, C117, C120, C152, and C154. The FAD-binding PCMH-type domain maps to 255–440; that stretch reads FKGERVMWIQ…LSVEIPYSKE (186 aa). FAD-binding positions include 283 to 290, F363, 373 to 377, D386, L430, and K448; these read LVVGNTEV and ALGGN. Mo-molybdopterin-binding residues include Q796 and F827. Substrate is bound by residues E831 and R909. R941 contributes to the Mo-molybdopterin binding site. The substrate site is built by F943 and T1039. A1108 serves as a coordination point for Mo-molybdopterin. E1290 serves as the catalytic Proton acceptor.

This sequence belongs to the xanthine dehydrogenase family. As to quaternary structure, homodimer. The cofactor is FAD. Mo-molybdopterin serves as cofactor. It depends on [2Fe-2S] cluster as a cofactor. Detected in liver (at protein level).

It is found in the peroxisome. It localises to the cytoplasm. It carries out the reaction xanthine + NAD(+) + H2O = urate + NADH + H(+). The enzyme catalyses hypoxanthine + NAD(+) + H2O = xanthine + NADH + H(+). The catalysed reaction is xanthine + O2 + H2O = urate + H2O2. In terms of biological role, key enzyme in purine degradation. Catalyzes the oxidation of hypoxanthine to xanthine. Catalyzes the oxidation of xanthine to uric acid. Contributes to the generation of reactive oxygen species. The polypeptide is Xanthine dehydrogenase/oxidase (XDH) (Gallus gallus (Chicken)).